Here is a 155-residue protein sequence, read N- to C-terminus: Endoribonuclease YbeY (155 aa).

3 residues coordinate Zn(2+): histidine 120, histidine 124, and histidine 130.

The protein belongs to the endoribonuclease YbeY family. The cofactor is Zn(2+).

Its subcellular location is the cytoplasm. In terms of biological role, single strand-specific metallo-endoribonuclease involved in late-stage 70S ribosome quality control and in maturation of the 3' terminus of the 16S rRNA. The protein is Endoribonuclease YbeY of Staphylococcus epidermidis (strain ATCC 35984 / DSM 28319 / BCRC 17069 / CCUG 31568 / BM 3577 / RP62A).